A 148-amino-acid polypeptide reads, in one-letter code: Short form salivary protein D7S1 (148 aa).

The N-terminal stretch at 1–21 is a signal peptide; it reads MKQNVFFLIAYFSLVFCMCNA. 3 disulfide bridges follow: cysteine 28/cysteine 61, cysteine 41/cysteine 147, and cysteine 103/cysteine 119.

The protein belongs to the PBP/GOBP family. Female salivary gland.

Its subcellular location is the secreted. In terms of biological role, in contrast to the related D7 salivary proteins that can bind biogenic amines, does not bind serotonin. In Aedes aegypti (Yellowfever mosquito), this protein is Short form salivary protein D7S1.